The sequence spans 216 residues: Glycerol-3-phosphate acyltransferase 3 (216 aa).

Transmembrane regions (helical) follow at residues 6–26 (LLLVVIVSYILGSIPFGYLVS), 58–78 (LVASLDVIKGASAVAFAGLVI), 92–112 (LLFAQVLAGLAAVAGHIWPVF), 125–145 (FGGMIALCPVAAIFGGEVLII), and 158–178 (ITGVVGAYALLVPLTLISGFP).

This sequence belongs to the PlsY family. Probably interacts with PlsX.

The protein resides in the cell membrane. The catalysed reaction is an acyl phosphate + sn-glycerol 3-phosphate = a 1-acyl-sn-glycero-3-phosphate + phosphate. Its pathway is lipid metabolism; phospholipid metabolism. Catalyzes the transfer of an acyl group from acyl-phosphate (acyl-PO(4)) to glycerol-3-phosphate (G3P) to form lysophosphatidic acid (LPA). This enzyme utilizes acyl-phosphate as fatty acyl donor, but not acyl-CoA or acyl-ACP. The sequence is that of Glycerol-3-phosphate acyltransferase 3 from Dehalococcoides mccartyi (strain CBDB1).